The following is a 108-amino-acid chain: uncharacterized protein (108 aa).

The next 3 membrane-spanning stretches (helical) occupy residues 26 to 46 (GAVY…ALII), 54 to 74 (LMTL…PLIF), and 84 to 104 (INYQ…CIYM).

Its subcellular location is the cell membrane. This is an uncharacterized protein from Methanocaldococcus jannaschii (strain ATCC 43067 / DSM 2661 / JAL-1 / JCM 10045 / NBRC 100440) (Methanococcus jannaschii).